We begin with the raw amino-acid sequence, 205 residues long: Small ribosomal subunit protein uS4 (205 aa).

Residues M1–G16 show a composition bias toward basic and acidic residues. The tract at residues M1–S46 is disordered. One can recognise an S4 RNA-binding domain in the interval S94–V157.

This sequence belongs to the universal ribosomal protein uS4 family. In terms of assembly, part of the 30S ribosomal subunit. Contacts protein S5. The interaction surface between S4 and S5 is involved in control of translational fidelity.

One of the primary rRNA binding proteins, it binds directly to 16S rRNA where it nucleates assembly of the body of the 30S subunit. In terms of biological role, with S5 and S12 plays an important role in translational accuracy. In Brucella abortus (strain S19), this protein is Small ribosomal subunit protein uS4.